Reading from the N-terminus, the 204-residue chain is Large ribosomal subunit protein uL4 (204 aa).

Residues 53–74 form a disordered region; the sequence is AYVSGGGKKPWRQKGRGGARAG.

This sequence belongs to the universal ribosomal protein uL4 family. In terms of assembly, part of the 50S ribosomal subunit.

One of the primary rRNA binding proteins, this protein initially binds near the 5'-end of the 23S rRNA. It is important during the early stages of 50S assembly. It makes multiple contacts with different domains of the 23S rRNA in the assembled 50S subunit and ribosome. In terms of biological role, forms part of the polypeptide exit tunnel. The chain is Large ribosomal subunit protein uL4 from Campylobacter curvus (strain 525.92).